Reading from the N-terminus, the 184-residue chain is dCTP deaminase (184 aa).

DCTP is bound by residues 107–112 (KSTYAR), 131–133 (TLE), glutamine 152, tyrosine 166, and glutamine 176. Residue glutamate 133 is the Proton donor/acceptor of the active site.

This sequence belongs to the dCTP deaminase family. Homotrimer.

The catalysed reaction is dCTP + H2O + H(+) = dUTP + NH4(+). Its pathway is pyrimidine metabolism; dUMP biosynthesis; dUMP from dCTP (dUTP route): step 1/2. In terms of biological role, catalyzes the deamination of dCTP to dUTP. The chain is dCTP deaminase from Novosphingobium aromaticivorans (strain ATCC 700278 / DSM 12444 / CCUG 56034 / CIP 105152 / NBRC 16084 / F199).